The sequence spans 214 residues: MITRIRGEMLEITPDYCVVMAGGLGYKIYIPDNCQEEIPDPGQEIDLHTYLSVREDAMTLYGFTSGEQLAVFELIMNVSGIGPKIALALVGTIPPTEFYLSVLNDQVNQLTKVPGIGKKSAQRIILELKEKVKDITSKDAYQDISASEKLDNTGEKLGISTRHKHLDELKAALSSLGYTNREIEKTVDAIQGQITEGQDMEELLRLALQKLNTK.

The interval 1–64 is domain I; it reads MITRIRGEML…EDAMTLYGFT (64 aa). The tract at residues 65–143 is domain II; the sequence is SGEQLAVFEL…DITSKDAYQD (79 aa). A flexible linker region spans residues 144–160; the sequence is ISASEKLDNTGEKLGIS. Residues 161–214 are domain III; the sequence is TRHKHLDELKAALSSLGYTNREIEKTVDAIQGQITEGQDMEELLRLALQKLNTK.

The protein belongs to the RuvA family. Homotetramer. Forms an RuvA(8)-RuvB(12)-Holliday junction (HJ) complex. HJ DNA is sandwiched between 2 RuvA tetramers; dsDNA enters through RuvA and exits via RuvB. An RuvB hexamer assembles on each DNA strand where it exits the tetramer. Each RuvB hexamer is contacted by two RuvA subunits (via domain III) on 2 adjacent RuvB subunits; this complex drives branch migration. In the full resolvosome a probable DNA-RuvA(4)-RuvB(12)-RuvC(2) complex forms which resolves the HJ.

It localises to the cytoplasm. Functionally, the RuvA-RuvB-RuvC complex processes Holliday junction (HJ) DNA during genetic recombination and DNA repair, while the RuvA-RuvB complex plays an important role in the rescue of blocked DNA replication forks via replication fork reversal (RFR). RuvA specifically binds to HJ cruciform DNA, conferring on it an open structure. The RuvB hexamer acts as an ATP-dependent pump, pulling dsDNA into and through the RuvAB complex. HJ branch migration allows RuvC to scan DNA until it finds its consensus sequence, where it cleaves and resolves the cruciform DNA. This Natranaerobius thermophilus (strain ATCC BAA-1301 / DSM 18059 / JW/NM-WN-LF) protein is Holliday junction branch migration complex subunit RuvA.